We begin with the raw amino-acid sequence, 164 residues long: Peptide deformylase (164 aa).

Fe cation is bound by residues Cys87 and His129. Glu130 is a catalytic residue. Residue His133 participates in Fe cation binding.

The protein belongs to the polypeptide deformylase family. Fe(2+) serves as cofactor.

The catalysed reaction is N-terminal N-formyl-L-methionyl-[peptide] + H2O = N-terminal L-methionyl-[peptide] + formate. In terms of biological role, removes the formyl group from the N-terminal Met of newly synthesized proteins. Requires at least a dipeptide for an efficient rate of reaction. N-terminal L-methionine is a prerequisite for activity but the enzyme has broad specificity at other positions. The polypeptide is Peptide deformylase (Thermotoga maritima (strain ATCC 43589 / DSM 3109 / JCM 10099 / NBRC 100826 / MSB8)).